The following is a 113-amino-acid chain: Cell cycle protein GpsB (113 aa).

Residues 36–68 (LDMVIKDYSTFTQEIEALQAENIRLVQELDNAP) adopt a coiled-coil conformation.

This sequence belongs to the GpsB family. Forms polymers through the coiled coil domains. Interacts with PBP1, MreC and EzrA.

The protein localises to the cytoplasm. Functionally, divisome component that associates with the complex late in its assembly, after the Z-ring is formed, and is dependent on DivIC and PBP2B for its recruitment to the divisome. Together with EzrA, is a key component of the system that regulates PBP1 localization during cell cycle progression. Its main role could be the removal of PBP1 from the cell pole after pole maturation is completed. Also contributes to the recruitment of PBP1 to the division complex. Not essential for septum formation. This is Cell cycle protein GpsB from Listeria monocytogenes serotype 4b (strain CLIP80459).